A 176-amino-acid polypeptide reads, in one-letter code: Ribosome maturation factor RimP (176 aa).

The disordered stretch occupies residues 143–176 (LKPQTAKKKGRQEETEDMTLELDAVSRAVPEAEI).

This sequence belongs to the RimP family.

The protein localises to the cytoplasm. In terms of biological role, required for maturation of 30S ribosomal subunits. This Chlorobium luteolum (strain DSM 273 / BCRC 81028 / 2530) (Pelodictyon luteolum) protein is Ribosome maturation factor RimP.